We begin with the raw amino-acid sequence, 144 residues long: Large ribosomal subunit protein uL15 (144 aa).

Residues 1–49 (MRLNTLSPAAGAKSAAKRVGRGIGSGLGKTAGRGHKGQKSRSGGGVRVG) are disordered. Positions 21–31 (RGIGSGLGKTA) are enriched in gly residues.

It belongs to the universal ribosomal protein uL15 family. In terms of assembly, part of the 50S ribosomal subunit.

In terms of biological role, binds to the 23S rRNA. In Shewanella piezotolerans (strain WP3 / JCM 13877), this protein is Large ribosomal subunit protein uL15.